A 237-amino-acid polypeptide reads, in one-letter code: Neurogenin-1 (237 aa).

The tract at residues 35–83 (LQQAASASGPPAPARRGAPNISRASEVPGAQDDEQERRRRRGRTRVRSE) is disordered. Positions 38 to 53 (AASASGPPAPARRGAP) are enriched in low complexity. A bHLH domain is found at 92-144 (SRRVKANDRERNRMHNLNAALDALRSVLPSFPDDTKLTKIETLRFAYNYIWAL). The disordered stretch occupies residues 175–209 (GPPSPASDAESWGSGAAAASPLSDPSSPAASEDFT). Positions 180–207 (ASDAESWGSGAAAASPLSDPSSPAASED) are enriched in low complexity.

Efficient DNA binding requires dimerization with another bHLH protein. As to expression, expression restricted to the embryonic nervous system.

The protein resides in the nucleus. In terms of biological role, acts as a transcriptional regulator. Involved in the initiation of neuronal differentiation. Activates transcription by binding to the E box (5'-CANNTG-3'). Associates with chromatin to enhancer regulatory elements in genes encoding key transcriptional regulators of neurogenesis. In Homo sapiens (Human), this protein is Neurogenin-1 (NEUROG1).